The chain runs to 740 residues: Alpha-1,6-mannosylglycoprotein 6-beta-N-acetylglucosaminyltransferase A (740 aa).

Topologically, residues M1–K13 are cytoplasmic. Residues L14–L30 form a helical; Signal-anchor for type II membrane protein membrane-spanning segment. Residues H31–L740 are Lumenal-facing. 3 N-linked (GlcNAc...) asparagine glycosylation sites follow: N109, N114, and N117. 9 disulfides stabilise this stretch: C144–C182, C155–C195, C171–C337, C371–C625, C648–C723, C652–C725, C659–C712, C680–C701, and C736–C739. The segment at N212–L740 is sufficient for catalytic activity. The N-linked (GlcNAc...) asparagine glycan is linked to N333. D377 to S378 contributes to the substrate binding site. N432 and N446 each carry an N-linked (GlcNAc...) asparagine glycan. Residue E525 coordinates UDP-N-acetyl-alpha-D-glucosamine. K553 is a binding site for substrate.

The protein belongs to the glycosyltransferase 18 family. In terms of processing, N-glycosylated. Post-translationally, a secreted form is released from the membrane after cleavage by gamma-secretase. As to expression, detected in kidney (at protein level). Detected in kidney.

The protein localises to the golgi apparatus membrane. It localises to the secreted. The enzyme catalyses N(4)-{beta-D-GlcNAc-(1-&gt;2)-[beta-D-GlcNAc-(1-&gt;4)]-alpha-D-Man-(1-&gt;3)-[beta-D-GlcNAc-(1-&gt;2)-alpha-D-Man-(1-&gt;6)]-beta-D-Man-(1-&gt;4)-beta-D-GlcNAc-(1-&gt;4)-beta-D-GlcNAc}-L-asparaginyl-[protein] + UDP-N-acetyl-alpha-D-glucosamine = N(4)-{beta-D-GlcNAc-(1-&gt;2)-[beta-D-GlcNAc-(1-&gt;4)]-alpha-D-Man-(1-&gt;3)-[beta-D-GlcNAc-(1-&gt;2)-[beta-D-GlcNAc-(1-&gt;6)]-alpha-D-Man-(1-&gt;6)]-beta-D-Man-(1-&gt;4)-beta-D-GlcNAc-(1-&gt;4)-beta-D-GlcNAc}-L-asparaginyl-[protein] + UDP + H(+). The protein operates within protein modification; protein glycosylation. Its function is as follows. Catalyzes the addition of N-acetylglucosamine (GlcNAc) in beta 1-6 linkage to the alpha-linked mannose of biantennary N-linked oligosaccharides. Catalyzes an important step in the biosynthesis of branched, complex-type N-glycans, such as those found on EGFR, TGFR (TGF-beta receptor) and CDH2. Via its role in the biosynthesis of complex N-glycans, plays an important role in the activation of cellular signaling pathways, reorganization of the actin cytoskeleton, cell-cell adhesion and cell migration. MGAT5-dependent EGFR N-glycosylation enhances the interaction between EGFR and LGALS3 and thereby prevents rapid EGFR endocytosis and prolongs EGFR signaling. Required for efficient interaction between TGFB1 and its receptor. Enhances activation of intracellular signaling pathways by several types of growth factors, including FGF2, PDGF, IGF, TGFB1 and EGF. MGAT5-dependent CDH2 N-glycosylation inhibits CDH2-mediated homotypic cell-cell adhesion and contributes to the regulation of downstream signaling pathways. Promotes cell migration. Contributes to the regulation of the inflammatory response. MGAT5-dependent TCR N-glycosylation enhances the interaction between TCR and LGALS3, limits agonist-induced TCR clustering, and thereby dampens TCR-mediated responses to antigens. Required for normal leukocyte evasation and accumulation at sites of inflammation. Inhibits attachment of monocytes to the vascular endothelium and subsequent monocyte diapedesis. In terms of biological role, promotes proliferation of umbilical vein endothelial cells and angiogenesis, at least in part by promoting the release of the growth factor FGF2 from the extracellular matrix. The chain is Alpha-1,6-mannosylglycoprotein 6-beta-N-acetylglucosaminyltransferase A (Mgat5) from Rattus norvegicus (Rat).